The chain runs to 158 residues: Cyclic pyranopterin monophosphate synthase (158 aa).

Substrate is bound by residues 74-76 (MCH) and 112-113 (ME). The active site involves D127.

It belongs to the MoaC family. In terms of assembly, homohexamer; trimer of dimers.

It carries out the reaction (8S)-3',8-cyclo-7,8-dihydroguanosine 5'-triphosphate = cyclic pyranopterin phosphate + diphosphate. The protein operates within cofactor biosynthesis; molybdopterin biosynthesis. Functionally, catalyzes the conversion of (8S)-3',8-cyclo-7,8-dihydroguanosine 5'-triphosphate to cyclic pyranopterin monophosphate (cPMP). In Helicobacter pylori (strain P12), this protein is Cyclic pyranopterin monophosphate synthase.